The primary structure comprises 202 residues: Proteasome subunit beta 1 (202 aa).

Met1 is a propeptide (removed in mature form; by autocatalysis). Residue Thr2 is the Nucleophile of the active site.

It belongs to the peptidase T1B family. In terms of assembly, the 20S proteasome core is composed of 14 alpha and 14 beta subunits that assemble into four stacked heptameric rings, resulting in a barrel-shaped structure. The two inner rings, each composed of seven catalytic beta subunits, are sandwiched by two outer rings, each composed of seven alpha subunits. The catalytic chamber with the active sites is on the inside of the barrel. Has a gated structure, the ends of the cylinder being occluded by the N-termini of the alpha-subunits. Is capped at one or both ends by the proteasome regulatory ATPase, PAN.

Its subcellular location is the cytoplasm. The enzyme catalyses Cleavage of peptide bonds with very broad specificity.. Its activity is regulated as follows. The formation of the proteasomal ATPase PAN-20S proteasome complex, via the docking of the C-termini of PAN into the intersubunit pockets in the alpha-rings, triggers opening of the gate for substrate entry. Interconversion between the open-gate and close-gate conformations leads to a dynamic regulation of the 20S proteasome proteolysis activity. Its function is as follows. Component of the proteasome core, a large protease complex with broad specificity involved in protein degradation. The chain is Proteasome subunit beta 1 from Pyrobaculum arsenaticum (strain DSM 13514 / JCM 11321 / PZ6).